The sequence spans 292 residues: Ribosomal RNA small subunit methyltransferase I (292 aa).

It belongs to the methyltransferase superfamily. RsmI family.

Its subcellular location is the cytoplasm. It catalyses the reaction cytidine(1402) in 16S rRNA + S-adenosyl-L-methionine = 2'-O-methylcytidine(1402) in 16S rRNA + S-adenosyl-L-homocysteine + H(+). Catalyzes the 2'-O-methylation of the ribose of cytidine 1402 (C1402) in 16S rRNA. The sequence is that of Ribosomal RNA small subunit methyltransferase I from Buchnera aphidicola subsp. Baizongia pistaciae (strain Bp).